The sequence spans 485 residues: Cysteine--tRNA ligase (485 aa).

Residue Cys29 coordinates Zn(2+). A 'HIGH' region motif is present at residues 31–41; sequence VTVYDHCHIGH. Cys209, His234, and Glu238 together coordinate Zn(2+). A 'KMSKS' region motif is present at residues 266 to 270; it reads KMSKS. Lys269 is an ATP binding site.

Belongs to the class-I aminoacyl-tRNA synthetase family. As to quaternary structure, monomer. It depends on Zn(2+) as a cofactor.

It is found in the cytoplasm. The enzyme catalyses tRNA(Cys) + L-cysteine + ATP = L-cysteinyl-tRNA(Cys) + AMP + diphosphate. This Geobacter metallireducens (strain ATCC 53774 / DSM 7210 / GS-15) protein is Cysteine--tRNA ligase.